The chain runs to 440 residues: MSYNYFGKKILILGLGLTGISCINFFLKKGIQPRVIDESNKPIFLNKIPKNIEYKLGNLKENWILESDLIIISPGISSFKPILMKARSLGIDIISDIELFSRETKCPIISITGTNGKSTVATMVKKIAEKSGYKVLLGGNIGFPVLEMLNKKASLYVLELSSFQLETTFNLKSKIAVVLNITEDHLDRYPEGFEQYKKTKLSIYNKAKICLIKLKKGEKKPFNTKSKKYISFGTCNNNDYYINYEKEKAILFHKNKKIVDTSNILLNGHHNYENILTSLAISDQMKFDQKVSINVLKKFLGLPHRFQTVHINNNISWINDSKSTNVDSTKAALKNLKIKGTIWLLLGGDGKSSNFNILKKYFEKIKIKIYCFGKDGLNLSKLCKKKSIYTKTLKQAIILISKKIQPGDVVLLSPGCSSKDQFSNFEERGNLFIKLSKEIN.

ATP is bound at residue 113-119 (GTNGKST).

It belongs to the MurCDEF family.

It localises to the cytoplasm. It carries out the reaction UDP-N-acetyl-alpha-D-muramoyl-L-alanine + D-glutamate + ATP = UDP-N-acetyl-alpha-D-muramoyl-L-alanyl-D-glutamate + ADP + phosphate + H(+). The protein operates within cell wall biogenesis; peptidoglycan biosynthesis. In terms of biological role, cell wall formation. Catalyzes the addition of glutamate to the nucleotide precursor UDP-N-acetylmuramoyl-L-alanine (UMA). This is UDP-N-acetylmuramoylalanine--D-glutamate ligase (murD) from Buchnera aphidicola subsp. Schizaphis graminum (strain Sg).